The following is a 273-amino-acid chain: Dermonecrotic toxin LspaSicTox-alphaIA1iii (273 aa).

The active site involves histidine 5. Glutamate 25 and aspartate 27 together coordinate Mg(2+). Histidine 41 (nucleophile) is an active-site residue. 2 disulfides stabilise this stretch: cysteine 45–cysteine 51 and cysteine 47–cysteine 190. Aspartate 85 contacts Mg(2+).

The protein belongs to the arthropod phospholipase D family. Class II subfamily. Mg(2+) serves as cofactor. Expressed by the venom gland.

The protein localises to the secreted. It carries out the reaction an N-(acyl)-sphingosylphosphocholine = an N-(acyl)-sphingosyl-1,3-cyclic phosphate + choline. The catalysed reaction is an N-(acyl)-sphingosylphosphoethanolamine = an N-(acyl)-sphingosyl-1,3-cyclic phosphate + ethanolamine. It catalyses the reaction a 1-acyl-sn-glycero-3-phosphocholine = a 1-acyl-sn-glycero-2,3-cyclic phosphate + choline. The enzyme catalyses a 1-acyl-sn-glycero-3-phosphoethanolamine = a 1-acyl-sn-glycero-2,3-cyclic phosphate + ethanolamine. Its function is as follows. Dermonecrotic toxins cleave the phosphodiester linkage between the phosphate and headgroup of certain phospholipids (sphingolipid and lysolipid substrates), forming an alcohol (often choline) and a cyclic phosphate. This toxin acts on sphingomyelin (SM). It may also act on ceramide phosphoethanolamine (CPE), lysophosphatidylcholine (LPC) and lysophosphatidylethanolamine (LPE), but not on lysophosphatidylserine (LPS), and lysophosphatidylglycerol (LPG). It acts by transphosphatidylation, releasing exclusively cyclic phosphate products as second products. Induces dermonecrosis, hemolysis, increased vascular permeability, edema, inflammatory response, and platelet aggregation. The chain is Dermonecrotic toxin LspaSicTox-alphaIA1iii from Loxosceles spadicea (Recluse spider).